A 90-amino-acid polypeptide reads, in one-letter code: Small ribosomal subunit protein uS15 (90 aa).

This sequence belongs to the universal ribosomal protein uS15 family. As to quaternary structure, part of the 30S ribosomal subunit. Forms a bridge to the 50S subunit in the 70S ribosome, contacting the 23S rRNA.

One of the primary rRNA binding proteins, it binds directly to 16S rRNA where it helps nucleate assembly of the platform of the 30S subunit by binding and bridging several RNA helices of the 16S rRNA. In terms of biological role, forms an intersubunit bridge (bridge B4) with the 23S rRNA of the 50S subunit in the ribosome. The polypeptide is Small ribosomal subunit protein uS15 (Helicobacter acinonychis (strain Sheeba)).